Here is a 264-residue protein sequence, read N- to C-terminus: Transmembrane protein 41A (264 aa).

Residues Met-1–Ala-17 form the signal peptide. 5 helical membrane passes run Ala-67–Gly-87, Gly-100–Leu-122, Leu-153–Leu-173, Ala-175–Pro-195, and Trp-219–Ile-239. Residues Gly-96 to Leu-207 form a VTT domain region. The N-linked (GlcNAc...) asparagine glycan is linked to Asn-250.

This sequence belongs to the TMEM41 family.

Its subcellular location is the membrane. This Homo sapiens (Human) protein is Transmembrane protein 41A (TMEM41A).